The sequence spans 270 residues: Bis(5'-nucleosyl)-tetraphosphatase, symmetrical (270 aa).

Belongs to the Ap4A hydrolase family.

The catalysed reaction is P(1),P(4)-bis(5'-adenosyl) tetraphosphate + H2O = 2 ADP + 2 H(+). Its function is as follows. Hydrolyzes diadenosine 5',5'''-P1,P4-tetraphosphate to yield ADP. In Actinobacillus pleuropneumoniae serotype 5b (strain L20), this protein is Bis(5'-nucleosyl)-tetraphosphatase, symmetrical.